Consider the following 375-residue polypeptide: MAKVAVWKPSILVLPRGLARWEVREAYVLAETAGYRVVDVLYYRRVSSSKLLSDAKLEELAEKAKSLVGNEYARIIVYDNLKPREYFRIVKATGVNTIDRTMLILEIFSLHAGSREAKLQIELARLRHELPLVREAIRLSKLKELPGFLGPGGYAIDAYYRYMVSRIAKIKRELRELRRRHEIERSKRRSAGLPHIAIVGYASAGKTSLFNAITGLQKPVGPEYFTTITPKRRAISFNGLRTVFIDTVGFIMRIPPEIIEAFHSTLEEAATADVILYVVDVSEPDTVIAEKLDEGLQTLRRIGVIDKPLIIAANKIDLVPQEDIERLTRLLEGAASTLYPALEAVIPVSAKTGAGVAKLLCRIATLLAGTKGSTC.

One can recognise a Hflx-type G domain in the interval 194–371 (PHIAIVGYAS…RIATLLAGTK (178 aa)). GTP-binding positions include 200 to 207 (GYASAGKT), 225 to 229 (FTTIT), 246 to 249 (DTVG), 314 to 317 (NKID), and 349 to 351 (SAK). 2 residues coordinate Mg(2+): threonine 207 and threonine 227.

It belongs to the TRAFAC class OBG-HflX-like GTPase superfamily. HflX GTPase family. As to quaternary structure, monomer. Associates with the 50S ribosomal subunit. Mg(2+) is required as a cofactor.

The protein resides in the cytoplasm. Its function is as follows. GTPase that associates with the 50S ribosomal subunit and may have a role during protein synthesis or ribosome biogenesis. This Hyperthermus butylicus (strain DSM 5456 / JCM 9403 / PLM1-5) protein is GTPase HflX.